Here is a 154-residue protein sequence, read N- to C-terminus: MADRLTQLQDTVNQQAEHFCNSIGILQQCSVPSKFAGFERTGSQTPQQQVHQQQQLPQQQQQQQQPQQQEDFPQLFSTLISRCAKDIDTLIESLPSEESSIELQVQSLQRLEAENKESAEKLEEIVRKGELLLEKIQAALSDIAQSQLDMQYSS.

Residues 37–71 form a disordered region; the sequence is GFERTGSQTPQQQVHQQQQLPQQQQQQQQPQQQED. Over residues 44-71 the composition is skewed to low complexity; it reads QTPQQQVHQQQQLPQQQQQQQQPQQQED. Residues 96 to 140 adopt a coiled-coil conformation; sequence SEESSIELQVQSLQRLEAENKESAEKLEEIVRKGELLLEKIQAAL.

This sequence belongs to the Mediator complex subunit 21 family. As to quaternary structure, component of the Mediator complex.

The protein resides in the nucleus. Its function is as follows. Component of the Mediator complex, a coactivator involved in the regulated transcription of nearly all RNA polymerase II-dependent genes. Mediator functions as a bridge to convey information from gene-specific regulatory proteins to the basal RNA polymerase II transcription machinery. Mediator is recruited to promoters by direct interactions with regulatory proteins and serves as a scaffold for the assembly of a functional preinitiation complex with RNA polymerase II and the general transcription factors. The chain is Mediator of RNA polymerase II transcription subunit 21 (MED21) from Anopheles gambiae (African malaria mosquito).